The chain runs to 440 residues: tRNA-2-methylthio-N(6)-dimethylallyladenosine synthase (440 aa).

An MTTase N-terminal domain is found at 3 to 119; it reads KKFFIKTFGC…LPELINQAQA (117 aa). [4Fe-4S] cluster contacts are provided by C12, C48, C82, C158, C162, and C165. One can recognise a Radical SAM core domain in the interval 144–374; that stretch reads RDNKYCAYVT…LELQKSILSE (231 aa). The TRAM domain occupies 377 to 437; sequence KKYEGTVQEV…PFSLEGELLE (61 aa).

It belongs to the methylthiotransferase family. MiaB subfamily. Monomer. It depends on [4Fe-4S] cluster as a cofactor.

The protein resides in the cytoplasm. It catalyses the reaction N(6)-dimethylallyladenosine(37) in tRNA + (sulfur carrier)-SH + AH2 + 2 S-adenosyl-L-methionine = 2-methylsulfanyl-N(6)-dimethylallyladenosine(37) in tRNA + (sulfur carrier)-H + 5'-deoxyadenosine + L-methionine + A + S-adenosyl-L-homocysteine + 2 H(+). Its function is as follows. Catalyzes the methylthiolation of N6-(dimethylallyl)adenosine (i(6)A), leading to the formation of 2-methylthio-N6-(dimethylallyl)adenosine (ms(2)i(6)A) at position 37 in tRNAs that read codons beginning with uridine. This chain is tRNA-2-methylthio-N(6)-dimethylallyladenosine synthase, found in Aquifex aeolicus (strain VF5).